We begin with the raw amino-acid sequence, 147 residues long: Large ribosomal subunit protein uL13 (147 aa).

This sequence belongs to the universal ribosomal protein uL13 family. In terms of assembly, part of the 50S ribosomal subunit.

In terms of biological role, this protein is one of the early assembly proteins of the 50S ribosomal subunit, although it is not seen to bind rRNA by itself. It is important during the early stages of 50S assembly. This chain is Large ribosomal subunit protein uL13, found in Mycolicibacterium paratuberculosis (strain ATCC BAA-968 / K-10) (Mycobacterium paratuberculosis).